We begin with the raw amino-acid sequence, 52 residues long: Movement protein TGBp3 (52 aa).

Residues methionine 1–glutamate 3 lie on the Lumenal side of the membrane. A helical membrane pass occupies residues serine 4–serine 21. At threonine 22 to histidine 52 the chain is on the cytoplasmic side.

This sequence belongs to the Tymovirales TGBp3 protein family.

Its subcellular location is the host endoplasmic reticulum membrane. In terms of biological role, plays a role in viral cell-to-cell propagation, by facilitating genome transport to neighboring plant cells through plasmosdesmata. May induce the formation of granular vesicles derived from the Endoplasmic reticulum, which align on actin filaments. The sequence is that of Movement protein TGBp3 from Foxtail mosaic virus.